The sequence spans 374 residues: Ras-related GTP-binding protein B (374 aa).

At methionine 1 the chain carries N-acetylmethionine. Positions 1-15 (MEESDSEKKTEKENV) are enriched in basic and acidic residues. Positions 1–30 (MEESDSEKKTEKENVGPKVEPPLGEPEGSL) are disordered. GTP-binding residues include serine 49 and glycine 50. Residues glycine 50, serine 51, glycine 52, lysine 53, threonine 54, serine 55, threonine 69, and threonine 75 each coordinate GDP. GTP-binding residues include glycine 52, lysine 53, threonine 54, serine 55, threonine 69, threonine 75, glycine 126, and histidine 188. The GDP site is built by histidine 188 and aspartate 191. A Glycyl lysine isopeptide (Lys-Gly) (interchain with G-Cter in ubiquitin) cross-link involves residue lysine 203. Residues leucine 209 and isoleucine 225 each contribute to the GDP site. Residue isoleucine 225 participates in GTP binding. Glycyl lysine isopeptide (Lys-Gly) (interchain with G-Cter in ubiquitin) cross-links involve residues lysine 281, lysine 291, and lysine 305.

Belongs to the GTR/RAG GTP-binding protein family. As to quaternary structure, interacts with RRAGC and RRAGD; heterodimerization stabilizes RRAG proteins. The GTP-bound form of RRAGB (in complex with the GDP-bound form of RRAGC or RRAGD) interacts with RPTOR, thereby promoting recruitment of mTORC1 to the lysosomes. Component of the lysosomal folliculin complex (LFC), composed of FLCN, FNIP1 (or FNIP2), RagA/RRAGA or RagB/RRAGB GDP-bound, RagC/RRAGC or RagD/RRAGD GTP-bound, and Ragulator. Interacts with SH3BP4; the interaction with this negative regulator is most probably direct, preferentially occurs with the inactive GDP-bound form of RRAGB, is negatively regulated by amino acids and prevents interaction with RPTOR. Interacts with the GATOR1 complex; inactivates RRAGB. The Rag heterodimer interacts with SLC38A9; the probable amino acid sensor. Interacts with SESN1, SESN2 and SESN3.

Its subcellular location is the cytoplasm. The protein resides in the lysosome membrane. It carries out the reaction GTP + H2O = GDP + phosphate + H(+). Its activity is regulated as follows. The activation of GTP-binding proteins is generally mediated by a guanine exchange factor (GEF), while inactivation through hydrolysis of bound GTP is catalyzed by a GTPase activating protein (GAP). The Ragulator complex functions as a GEF and promotes the active GTP-bound form. The GATOR1 complex functions as a GAP and stimulates RRAGB GTPase activity to turn it into its inactive GDP-bound form, preventing mTORC1 recruitment and activation. Guanine nucleotide-binding protein that plays a crucial role in the cellular response to amino acid availability through regulation of the mTORC1 signaling cascade. Forms heterodimeric Rag complexes with RagC/RRAGC or RagD/RRAGD and cycles between an inactive GDP-bound and an active GTP-bound form: RagB/RRAGB is in its active form when GTP-bound RagB/RRAGB forms a complex with GDP-bound RagC/RRAGC (or RagD/RRAGD) and in an inactive form when GDP-bound RagB/RRAGB heterodimerizes with GTP-bound RagC/RRAGC (or RagD/RRAGD). In its GTP-bound active form, promotes the recruitment of mTORC1 to the lysosomes and its subsequent activation by the GTPase RHEB. Involved in the RCC1/Ran-GTPase pathway. This is Ras-related GTP-binding protein B from Mus musculus (Mouse).